We begin with the raw amino-acid sequence, 371 residues long: Leu/Ile/Val-binding protein homolog 1 (371 aa).

Residues 1–23 form the signal peptide; that stretch reads MRKTLFSGVALAAVIAFGGSAWA.

It belongs to the leucine-binding protein family.

Functionally, component of an amino-acid transport system. The sequence is that of Leu/Ile/Val-binding protein homolog 1 from Brucella melitensis biotype 1 (strain ATCC 23456 / CCUG 17765 / NCTC 10094 / 16M).